The primary structure comprises 769 residues: P-selectin (769 aa).

The first 32 residues, 1–32 (MASCPKAIWSWRFQRVVFRSVQLLCFSILIFE), serve as a signal peptide directing secretion. The Extracellular portion of the chain corresponds to 33-717 (LMTQKEVSAW…QEALTYIGGA (685 aa)). Residues asparagine 54 and asparagine 80 are each glycosylated (N-linked (GlcNAc...) asparagine). One can recognise a C-type lectin domain in the interval 58-158 (AFCQKYYTDL…PCGKRKRALC (101 aa)). 21 disulfides stabilise this stretch: cysteine 60/cysteine 158, cysteine 131/cysteine 150, cysteine 163/cysteine 174, cysteine 168/cysteine 183, cysteine 185/cysteine 194, cysteine 200/cysteine 244, cysteine 230/cysteine 257, cysteine 262/cysteine 306, cysteine 292/cysteine 319, cysteine 324/cysteine 368, cysteine 354/cysteine 381, cysteine 386/cysteine 430, cysteine 416/cysteine 443, cysteine 448/cysteine 492, cysteine 478/cysteine 505, cysteine 510/cysteine 554, cysteine 540/cysteine 567, cysteine 581/cysteine 625, cysteine 611/cysteine 638, cysteine 643/cysteine 687, and cysteine 673/cysteine 700. Residues glutamate 121, asparagine 123, and asparagine 124 each contribute to the Ca(2+) site. Asparagine 123 lines the a carbohydrate pocket. Glutamate 133 and asparagine 146 together coordinate a carbohydrate. Asparagine 146 and aspartate 147 together coordinate Ca(2+). In terms of domain architecture, EGF-like spans 159–195 (YRASCQDMSCSKQGECIETIGNYTCSCYPGFYGPECE). Asparagine 180 is a glycosylation site (N-linked (GlcNAc...) asparagine). Sushi domains lie at 198 to 259 (RECG…QCVA), 260 to 321 (VQCP…VCKA), 322 to 383 (IACE…VCQA), 384 to 445 (LQCQ…ECQA), 446 to 507 (VTCA…TCEA), 508 to 569 (SKCP…SCKV), 579 to 640 (LRCP…TCRA), and 641 to 702 (VKCS…TCQA). Residues asparagine 212 and asparagine 219 are each glycosylated (N-linked (GlcNAc...) asparagine). An N-linked (GlcNAc...) asparagine glycan is attached at asparagine 347. Residue asparagine 398 is glycosylated (N-linked (GlcNAc...) asparagine). Asparagine 604 carries N-linked (GlcNAc...) asparagine glycosylation. Residues asparagine 655, asparagine 662, and asparagine 680 are each glycosylated (N-linked (GlcNAc...) asparagine). The helical transmembrane segment at 718–734 (AAGTTGLVTSSILLALL) threads the bilayer. Residues 735–769 (RRRRRQKDDGKSPLNPQSHLGTYGVFTNAAFDPSP) are Cytoplasmic-facing. The segment at 740 to 769 (QKDDGKSPLNPQSHLGTYGVFTNAAFDPSP) is disordered. Positions 757–760 (YGVF) match the Endocytosis signal motif. Residues 760 to 769 (FTNAAFDPSP) form an interaction with SNX17 region.

This sequence belongs to the selectin/LECAM family. In terms of assembly, interacts with SNX17. Interacts with SELPLG/PSGL1 and PODXL2 and mediates neutrophil adhesion and leukocyte rolling. This interaction requires the sialyl-Lewis X epitope of SELPLG and PODXL2, and specific tyrosine sulfation on SELPLG. Interacts (via C-type lectin domain) with alpha-IIb/beta3 integrin ITGA2B:ITGB3 and alpha-V/beta-3 integrin ITGAV:ITGB3. Interacts with alpha5/beta1 integrin ITGA5:ITGB1 and alpha4/beta1 integrin ITGA4:ITGB.

Its subcellular location is the cell membrane. In terms of biological role, ca(2+)-dependent receptor for myeloid cells that binds to carbohydrates on neutrophils and monocytes. Mediates the interaction of activated endothelial cells or platelets with leukocytes. The ligand recognized is sialyl-Lewis X. Mediates rapid rolling of leukocyte rolling over vascular surfaces during the initial steps in inflammation through interaction with SELPLG. Mediates cell-cell interactions and cell adhesion via the interaction with integrin alpha-IIb/beta3 (ITGA2B:ITGB3) and integrin alpha-V/beta-3 (ITGAV:ITGB3). The polypeptide is P-selectin (SELP) (Ovis aries (Sheep)).